The chain runs to 295 residues: Elongation factor Ts (295 aa).

An involved in Mg(2+) ion dislocation from EF-Tu region spans residues 79–82 (TDFV).

Belongs to the EF-Ts family.

The protein resides in the cytoplasm. Associates with the EF-Tu.GDP complex and induces the exchange of GDP to GTP. It remains bound to the aminoacyl-tRNA.EF-Tu.GTP complex up to the GTP hydrolysis stage on the ribosome. The polypeptide is Elongation factor Ts (Bacillus cereus (strain B4264)).